Reading from the N-terminus, the 277-residue chain is Ribosomal RNA small subunit methyltransferase A (277 aa).

S-adenosyl-L-methionine contacts are provided by Asn27, Leu29, Gly54, Glu75, Asp95, and Asn118.

This sequence belongs to the class I-like SAM-binding methyltransferase superfamily. rRNA adenine N(6)-methyltransferase family. RsmA subfamily.

It is found in the cytoplasm. It catalyses the reaction adenosine(1518)/adenosine(1519) in 16S rRNA + 4 S-adenosyl-L-methionine = N(6)-dimethyladenosine(1518)/N(6)-dimethyladenosine(1519) in 16S rRNA + 4 S-adenosyl-L-homocysteine + 4 H(+). Its function is as follows. Specifically dimethylates two adjacent adenosines (A1518 and A1519) in the loop of a conserved hairpin near the 3'-end of 16S rRNA in the 30S particle. May play a critical role in biogenesis of 30S subunits. The sequence is that of Ribosomal RNA small subunit methyltransferase A from Chlamydia muridarum (strain MoPn / Nigg).